A 156-amino-acid polypeptide reads, in one-letter code: Cellulose synthase operon protein D (156 aa).

It functions in the pathway glycan metabolism; bacterial cellulose biosynthesis. Its function is as follows. May have a major role in the perfection of crystallization, involved either in the pore structure itself or in the organization of the pores within the linear array of terminal synthesizing complexes (TCs). The chain is Cellulose synthase operon protein D from Komagataeibacter sucrofermentans (strain ATCC 700178 / DSM 15973 / CECT 7291 / JCM 9730 / LMG 18788 / BPR 2001) (Acetobacter xylinus subsp. sucrofermentans).